The following is a 505-amino-acid chain: Protein DETOXIFICATION 50 (505 aa).

12 helical membrane-spanning segments follow: residues Leu46–Gly66, Ala78–Glu98, Ile121–Ile141, Ala155–Leu175, Ile194–Ile214, Leu219–Phe239, Ile275–Leu295, Gly305–Val325, Ala344–Val364, Ile380–Pro400, Ala424–Phe444, and Gly446–Thr466.

This sequence belongs to the multi antimicrobial extrusion (MATE) (TC 2.A.66.1) family. As to expression, preferentially expressed in rosette leaves. Detected mainly in the vascular tissues and guard cells. Mostly detected at reproductive stages in young anthers, in mature pollens and during pollen germination on the pistil. Also expressed in developing seeds.

It is found in the cell membrane. The protein localises to the late endosome membrane. In terms of biological role, functions as a multidrug and toxin extrusion transporter in the export of abscisic acid (ABA) in guard cells. Plays a role in ABA-mediated growth inhibition and responses to drought conditions. May act as a negative regulator of hypocotyl cell elongation in the light. The chain is Protein DETOXIFICATION 50 from Arabidopsis thaliana (Mouse-ear cress).